The following is an 882-amino-acid chain: Translation initiation factor IF-2 (882 aa).

The interval 28-294 (GIRKSADDSV…SSLQQGFQKP (267 aa)) is disordered. Residues 67-81 (STLNIPGTGGKSKSV) are compositionally biased toward polar residues. A compositionally biased stretch (basic and acidic residues) spans 92 to 209 (VKRDPQEAER…RMAEENKWTD (118 aa)). Over residues 244 to 258 (GRGRNAKAARPKKGN) the composition is skewed to basic residues. Residues 259–272 (KHAESKADREEARA) are compositionally biased toward basic and acidic residues. The 170-residue stretch at 381-550 (PRAPVVTIMG…LLQAEVLELK (170 aa)) folds into the tr-type G domain. The tract at residues 390 to 397 (GHVDHGKT) is G1. 390–397 (GHVDHGKT) lines the GTP pocket. The G2 stretch occupies residues 415 to 419 (GITQH). Residues 436-439 (DTPG) are G3. GTP is bound by residues 436 to 440 (DTPGH) and 490 to 493 (NKID). The tract at residues 490 to 493 (NKID) is G4. A G5 region spans residues 526–528 (SAK). The residue at position 800 (Lys-800) is an N6-acetyllysine.

The protein belongs to the TRAFAC class translation factor GTPase superfamily. Classic translation factor GTPase family. IF-2 subfamily.

Its subcellular location is the cytoplasm. Its function is as follows. One of the essential components for the initiation of protein synthesis. Protects formylmethionyl-tRNA from spontaneous hydrolysis and promotes its binding to the 30S ribosomal subunits. Also involved in the hydrolysis of GTP during the formation of the 70S ribosomal complex. The sequence is that of Translation initiation factor IF-2 from Shigella flexneri serotype 5b (strain 8401).